The following is a 354-amino-acid chain: DNA polymerase IV (354 aa).

The 185-residue stretch at 14–198 folds into the UmuC domain; sequence IIHIDMDAFF…MDIAKFHGVG (185 aa). Residues D18 and D116 each contribute to the Mg(2+) site. E117 is a catalytic residue.

The protein belongs to the DNA polymerase type-Y family. In terms of assembly, monomer. Requires Mg(2+) as cofactor.

Its subcellular location is the cytoplasm. It catalyses the reaction DNA(n) + a 2'-deoxyribonucleoside 5'-triphosphate = DNA(n+1) + diphosphate. In terms of biological role, poorly processive, error-prone DNA polymerase involved in untargeted mutagenesis. Copies undamaged DNA at stalled replication forks, which arise in vivo from mismatched or misaligned primer ends. These misaligned primers can be extended by PolIV. Exhibits no 3'-5' exonuclease (proofreading) activity. May be involved in translesional synthesis, in conjunction with the beta clamp from PolIII. The polypeptide is DNA polymerase IV (Streptococcus sanguinis (strain SK36)).